The chain runs to 829 residues: Ent-cassa-12,15-diene synthase (829 aa).

Positions 1-50 are disordered; it reads MMLLGSPSSGGYGGKFAGASPAGGTTTMAPSAKQPSSRAPPPGITGGRND. The segment covering 23–37 has biased composition (polar residues); the sequence is GGTTTMAPSAKQPSS. Mg(2+)-binding residues include D576, D580, N720, and E728. Residues 576 to 580 carry the DDXXD motif motif; it reads DDLFD.

Belongs to the terpene synthase family. Requires Mg(2+) as cofactor. As to expression, expressed in roots and stems.

It catalyses the reaction ent-copalyl diphosphate = ent-cassa-12,15-diene + diphosphate. In terms of biological role, involved in phytocassane phytoalexins biosynthesis. Catalyzes the conversion of ent-copalyl diphosphate to the phytoalexin precursor ent-cassa-12,15-diene. The chain is Ent-cassa-12,15-diene synthase (KSL7) from Oryza sativa subsp. japonica (Rice).